A 163-amino-acid polypeptide reads, in one-letter code: Small ribosomal subunit protein eS10A (163 aa).

The interval 92–163 is disordered; sequence LTQTTRSNAV…GFGRASRYDN (72 aa). The span at 105-116 shows a compositional bias: gly residues; the sequence is GGPGGPGGGFGG.

It belongs to the eukaryotic ribosomal protein eS10 family.

Its subcellular location is the cytoplasm. This chain is Small ribosomal subunit protein eS10A (RpS10a), found in Drosophila melanogaster (Fruit fly).